The primary structure comprises 287 residues: ATP synthase gamma chain (287 aa).

The protein belongs to the ATPase gamma chain family. As to quaternary structure, F-type ATPases have 2 components, CF(1) - the catalytic core - and CF(0) - the membrane proton channel. CF(1) has five subunits: alpha(3), beta(3), gamma(1), delta(1), epsilon(1). CF(0) has three main subunits: a, b and c.

It is found in the cell inner membrane. Produces ATP from ADP in the presence of a proton gradient across the membrane. The gamma chain is believed to be important in regulating ATPase activity and the flow of protons through the CF(0) complex. This Cronobacter sakazakii (strain ATCC BAA-894) (Enterobacter sakazakii) protein is ATP synthase gamma chain.